Here is a 611-residue protein sequence, read N- to C-terminus: MTDVPSPFDPKAFVRSLTQRPGVYRMVDGRGEVLYVGKARNLKKRVASYFTRSRKSARIELMLTQVQDIQVTVTHTEAEALILENTLIKELRPRYNVLLRDDKSYPWIYLSSHQDFPRLSFHRGARKGPGRWFGPFPSGHAVRETLNTLQKVFRIRQCQDSFFSNRSRPCLQHQIKRCTAPCVGYISREAYQEDVRHAVLFLEGRSNQVIEELGARMEAASERLEFEAAAQYRDRIQALQAVQERQYIVGEKGDLDVIACVSDGVTACVTVFFFRQGRNLGNKVFYPRIPEGADEAEVLAAFLARYYIGRKAPPELVISHTIPEQKVLGEALSRESGHRVRVTHSVRKERRRWLEMALTNARHALTARTSTQAMALHRLEALQDALQLPALPERIECFDISHTRGEATVAACVVFNQDGPLKSDYRRFNIRGITPGDDYAAMRQALSRRYQRLKKGEGVLPDILLIDGGKGQVAQAEAVLEELQVDDVYLVGIAKGPERRPGEETLILSDEDGREKTLGPDAPALQLLQQVRDEAHRFAIAGHRQQRGKARTRSALEDIPGLGPKRRQALLRHFGGLKAVARAGVEDLARTPGISRALAQKVYDHYHGDSG.

Residues 19–97 form the GIY-YIG domain; the sequence is QRPGVYRMVD…IKELRPRYNV (79 aa). The region spanning 207–242 is the UVR domain; it reads NQVIEELGARMEAASERLEFEAAAQYRDRIQALQAV.

The protein belongs to the UvrC family. As to quaternary structure, interacts with UvrB in an incision complex.

It localises to the cytoplasm. The UvrABC repair system catalyzes the recognition and processing of DNA lesions. UvrC both incises the 5' and 3' sides of the lesion. The N-terminal half is responsible for the 3' incision and the C-terminal half is responsible for the 5' incision. This is UvrABC system protein C from Alkalilimnicola ehrlichii (strain ATCC BAA-1101 / DSM 17681 / MLHE-1).